The sequence spans 66 residues: Large ribosomal subunit protein bL35 (66 aa).

Basic residues-rich tracts occupy residues 1 to 15 and 24 to 40; these read MPKL…KRFK and HAQR…TKKQ. The tract at residues 1 to 40 is disordered; the sequence is MPKLKTKSGAKKRFKVTGTGKVMHAQRGKRHGMIKRTKKQ.

This sequence belongs to the bacterial ribosomal protein bL35 family.

In Bradyrhizobium sp. (strain ORS 278), this protein is Large ribosomal subunit protein bL35.